The following is a 489-amino-acid chain: Protein K15 (489 aa).

The first 26 residues, 1–26 (MKTLIFFWNLWLWALLVCFWCITLVC), serve as a signal peptide directing secretion. Transmembrane regions (helical) follow at residues 29 to 49 (TNSI…VSAI), 63 to 83 (WPSS…WNLS), 89 to 109 (TYAC…LTLI), 121 to 141 (HGIL…VHMS), 148 to 168 (WIFF…FATV), 175 to 195 (LVSS…VSCC), 200 to 220 (CTAT…TGII), 237 to 257 (FLLL…LLAI), 264 to 284 (IKGH…LYVW), 296 to 316 (MLHL…VMLL), and 324 to 344 (ILTM…LLVF).

In terms of assembly, interacts with host LYN; this interaction modulates B-cells signaling. Interacts with host ITSN2.

It is found in the host cell membrane. The protein resides in the host Golgi apparatus. It localises to the host trans-Golgi network. Plays a crucial role for reactivation of the virus from latency, early viral gene expression and virus production. Modulates host signaling pathways including activation of MAP kinases c-JUN-N-terminal kinase (JNK), ERK2, and NF-kappa-B resulting in the activation of AP-1 and NFAT-dependent gene expression in B-lymphocytes. When expressed in epithelial cells, induces the expression of several inflammatory and angiogenic genes. Also interferes with B-lymphocytes signaling through interaction with host LYN kinase. This chain is Protein K15 (K15), found in Human herpesvirus 8 type P (isolate GK18) (HHV-8).